We begin with the raw amino-acid sequence, 169 residues long: uncharacterized protein (169 aa).

One can recognise an HTH asnC-type domain in the interval 18–79 (LDRADVALLN…IVSPKAVGRP (62 aa)). The H-T-H motif DNA-binding region spans 37 to 56 (SEELADKVGLSPTACQRRLK).

This is an uncharacterized protein from Sinorhizobium fredii (strain NBRC 101917 / NGR234).